The primary structure comprises 37 residues: Cytochrome b6-f complex subunit 5 (37 aa).

Residues 5-25 traverse the membrane as a helical segment; it reads ILLGIVLGMVLVTLAGLFVAA.

It belongs to the PetG family. The 4 large subunits of the cytochrome b6-f complex are cytochrome b6, subunit IV (17 kDa polypeptide, PetD), cytochrome f and the Rieske protein, while the 4 small subunits are PetG, PetL, PetM and PetN. The complex functions as a dimer.

It localises to the cellular thylakoid membrane. In terms of biological role, component of the cytochrome b6-f complex, which mediates electron transfer between photosystem II (PSII) and photosystem I (PSI), cyclic electron flow around PSI, and state transitions. PetG is required for either the stability or assembly of the cytochrome b6-f complex. This chain is Cytochrome b6-f complex subunit 5, found in Synechococcus sp. (strain JA-3-3Ab) (Cyanobacteria bacterium Yellowstone A-Prime).